An 807-amino-acid polypeptide reads, in one-letter code: cAMP-regulated phosphoprotein 21 (807 aa).

The segment at 1–127 (MSEQGGLTPT…KNREKLSERP (127 aa)) is disordered. Residue S2 is modified to N-acetylserine. Phosphoserine is present on S32. Residues 32 to 57 (SLDEEEKLELQRRLAAQNQERRKSKS) adopt a coiled-coil conformation. Residue S55 is modified to Phosphoserine; by PKA. Residues 89-98 (IHLQLSSFPS) show a composition bias toward polar residues. Residues 101 to 127 (EEDKSRKDDSEREKEKDKNREKLSERP) show a composition bias toward basic and acidic residues. Position 133 is a phosphoserine (S133). Residues 163–226 (RMILLKMEQE…SVIINKTSST (64 aa)) form the R3H domain. One can recognise an SUZ domain in the interval 227-298 (RIPEQRFCEH…VRERIFAHDS (72 aa)). Residues 245-282 (SQKRFILKRDNSSIDKEDNQNRMHPFRDDRRSKSIEER) form a disordered region. N265 and S298 each carry phosphoserine. Disordered regions lie at residues 328-434 (LFRA…TSSV), 474-536 (GSIL…QPQM), 552-576 (SQLS…YPAS), and 595-627 (QLST…QQPP). A compositionally biased stretch (low complexity) spans 337–348 (GRTSGSRQSSSE). A compositionally biased stretch (basic and acidic residues) spans 349-358 (TELRWPDHQR). Positions 359 to 380 (AWSSTDSDSSNRNLKPTMTKTA) are enriched in polar residues. Phosphoserine occurs at positions 361 and 381. Residues 401–421 (GKLSKTGSESSSSAGSSGSLS) show a composition bias toward low complexity. Positions 422–434 (RTHPQSTALTSSV) are enriched in polar residues. Residues 514–524 (QQPPQQQPSPQ) show a composition bias toward pro residues. Over residues 525–535 (PQQQVQASQPQ) the composition is skewed to low complexity. Composition is skewed to polar residues over residues 552–563 (SQLSMSRQSSGD) and 595–613 (QLST…QQVL). Phosphoserine is present on S557. R650 is subject to Asymmetric dimethylarginine.

In terms of assembly, interacts with CALM1. Post-translationally, phosphorylation of isoform 2 at Ser-55 is enhanced upon dopamine D1 receptor activation and favors interaction with CALM1. In terms of processing, methylated by CARM1 at Arg-650 in immature thymocytes. As to expression, present at high levels in thymus and low levels in brain. In thymus, isoform 1 is specifically found in immature thymocytes (at protein level).

It is found in the cytoplasm. Functionally, may act as a competitive inhibitor of calmodulin-dependent enzymes such as calcineurin in neurons. The sequence is that of cAMP-regulated phosphoprotein 21 (Arpp21) from Mus musculus (Mouse).